The following is a 158-amino-acid chain: DNA-binding transcriptional repressor RacR (158 aa).

In terms of assembly, homooctamer.

In terms of biological role, transcriptional regulator that represses the expression of ydaS and ydaT under normal physiological conditions. It binds to its own upstream sequence and represses the adjacent and divergently coded ydaS-ydaT operon. RacR-mediated down-regulation of ydaS and ydaT may be critical for cell survival. RacR ensures that the prophage DNA is maintained in the genome. When the expression of the racR gene is reduced, the prophage Rac is excised from the genome, possibly to counteract the lethal toxicity of YdaT. In Escherichia coli (strain K12), this protein is DNA-binding transcriptional repressor RacR (racR).